The sequence spans 470 residues: Cysteine--tRNA ligase 1 (470 aa).

Cysteine 29 provides a ligand contact to Zn(2+). Residues proline 31 to asparagine 41 carry the 'HIGH' region motif. Zn(2+)-binding residues include cysteine 221, histidine 246, and glutamate 250. Residues lysine 279 to serine 283 carry the 'KMSKS' region motif. Lysine 282 provides a ligand contact to ATP.

This sequence belongs to the class-I aminoacyl-tRNA synthetase family. As to quaternary structure, monomer. Requires Zn(2+) as cofactor.

It localises to the cytoplasm. It catalyses the reaction tRNA(Cys) + L-cysteine + ATP = L-cysteinyl-tRNA(Cys) + AMP + diphosphate. This chain is Cysteine--tRNA ligase 1, found in Burkholderia lata (strain ATCC 17760 / DSM 23089 / LMG 22485 / NCIMB 9086 / R18194 / 383).